Reading from the N-terminus, the 405-residue chain is Tryptophan synthase beta chain (405 aa).

Lys-95 bears the N6-(pyridoxal phosphate)lysine mark.

The protein belongs to the TrpB family. As to quaternary structure, tetramer of two alpha and two beta chains. The cofactor is pyridoxal 5'-phosphate.

The enzyme catalyses (1S,2R)-1-C-(indol-3-yl)glycerol 3-phosphate + L-serine = D-glyceraldehyde 3-phosphate + L-tryptophan + H2O. Its pathway is amino-acid biosynthesis; L-tryptophan biosynthesis; L-tryptophan from chorismate: step 5/5. Functionally, the beta subunit is responsible for the synthesis of L-tryptophan from indole and L-serine. This chain is Tryptophan synthase beta chain, found in Pseudomonas putida (strain ATCC 700007 / DSM 6899 / JCM 31910 / BCRC 17059 / LMG 24140 / F1).